The following is a 1487-amino-acid chain: Murinoglobulin-1 (1487 aa).

The N-terminal stretch at 1–24 (MKKNREAQLCLFSALLAFLPFASL) is a signal peptide. The cysteines at positions 48 and 86 are disulfide-linked. 2 N-linked (GlcNAc...) asparagine glycosylation sites follow: Asn55 and Asn247. Cystine bridges form between Cys251-Cys283 and Cys269-Cys295. N-linked (GlcNAc...) asparagine glycosylation is found at Asn301, Asn321, Asn393, and Asn508. 3 disulfide bridges follow: Cys468/Cys563, Cys595/Cys784, and Cys643/Cys689. Residues 686–745 (PTYCYEMNMVVLSAPAVESELSPRGGEFEMMPLGVNKSPLPKEPPRKDPPPKDPVIETIR) form a bait region region. Residues Asn760, Asn787, and Asn882 are each glycosylated (N-linked (GlcNAc...) asparagine). Disulfide bonds link Cys860-Cys896, Cys934-Cys1334, Cys1092-Cys1140, and Cys1365-Cys1480. A cross-link (isoglutamyl cysteine thioester (Cys-Gln)) is located at residues 985 to 988 (CGEQ). A glycan (N-linked (GlcNAc...) asparagine) is linked at Asn1004. 3 N-linked (GlcNAc...) asparagine glycosylation sites follow: Asn1153, Asn1324, and Asn1437.

It belongs to the protease inhibitor I39 (alpha-2-macroglobulin) family. In terms of assembly, monomer. As to expression, plasma.

It localises to the secreted. In terms of biological role, a proteinase activates the inhibitor by specific proteolysis in the bait region, which, by an unknown mechanism leads to reaction at the cysteinyl-glutamyl internal thiol ester site and to a conformational change, whereby the proteinase is trapped and/or covalently bound to the inhibitor. While in the tetrameric proteinase inhibitors steric inhibition is sufficiently strong, monomeric forms need a covalent linkage between the activated glutamyl residue of the original thiol ester and a terminal amino group of a lysine or another nucleophilic group on the proteinase, for inhibition to be effective. This Rattus norvegicus (Rat) protein is Murinoglobulin-1.